The sequence spans 108 residues: Integration host factor subunit alpha (108 aa).

The protein belongs to the bacterial histone-like protein family. In terms of assembly, heterodimer of an alpha and a beta chain.

Functionally, this protein is one of the two subunits of integration host factor, a specific DNA-binding protein that functions in genetic recombination as well as in transcriptional and translational control. The polypeptide is Integration host factor subunit alpha (Bartonella henselae (strain ATCC 49882 / DSM 28221 / CCUG 30454 / Houston 1) (Rochalimaea henselae)).